A 1915-amino-acid polypeptide reads, in one-letter code: Methylcytosine dioxygenase tet3-B (1915 aa).

Residues 28 to 49 (RLRVSEMPSELNGGGDGSKGDG) form a disordered region. The CXXC-type zinc-finger motif lies at 61-102 (SNKKRKRCGVCVPCLRKEPCGTCYNCVNRSTSHQICKMRKCE). 8 residues coordinate Zn(2+): C68, C71, C74, C80, C83, C86, C96, and C101. The segment covering 629–638 (PNSQQAPVSK) has biased composition (polar residues). Disordered stretches follow at residues 629–679 (PNSQ…RVKE), 776–806 (GRCP…VPGQ), and 831–880 (FSLP…LSNN). A compositionally biased stretch (basic residues) spans 664–676 (KPPRKQVQIKKPR). Positions 779–793 (PTPSTGDSSSGQGDS) are enriched in low complexity. 2 stretches are compositionally biased toward polar residues: residues 838–854 (VPSQ…TSGV) and 864–880 (QLPS…LSNN). 5 residues coordinate Zn(2+): C974, C976, C1034, H1060, and C1062. R1102 serves as a coordination point for 2-oxoglutarate. C1112, C1114, C1130, C1139, and C1199 together coordinate Zn(2+). C1215 contributes to the 2-oxoglutarate binding site. H1221 is a binding site for Zn(2+). Positions 1223 and 1225 each coordinate Fe cation. H1257 provides a ligand contact to 2-oxoglutarate. 3 disordered regions span residues 1298 to 1356 (LSEP…QTKP), 1469 to 1516 (GMNQ…APME), and 1719 to 1753 (PAVN…VKEE). The span at 1308-1339 (RQLDAKKATAEKKKLQKEKLVSPDKTKQEPSD) shows a compositional bias: basic and acidic residues. The span at 1340-1355 (TKTCQQNPGVPQQQTK) shows a compositional bias: polar residues. Basic and acidic residues predominate over residues 1482-1491 (NYRRSSEVPH). Composition is skewed to polar residues over residues 1494–1503 (SLQNSNSQKS) and 1720–1732 (AVNS…SQNH). A Fe cation-binding site is contributed by H1794. 1809–1811 (RIS) provides a ligand contact to 2-oxoglutarate. The stretch at 1827–1860 (LALWEAKMKQLAERARVKEEEAAKLGIKQEVKSL) forms a coiled coil.

The protein belongs to the TET family. Fe(2+) is required as a cofactor. Zn(2+) serves as cofactor. Detected in embryo (at protein level). Detected in embryonic head, in developing brain and eye.

The protein resides in the nucleus. It is found in the chromosome. It catalyses the reaction a 5-methyl-2'-deoxycytidine in DNA + 2-oxoglutarate + O2 = a 5-hydroxymethyl-2'-deoxycytidine in DNA + succinate + CO2. It carries out the reaction a 5-hydroxymethyl-2'-deoxycytidine in DNA + 2-oxoglutarate + O2 = a 5-formyl-2'-deoxycytidine in DNA + succinate + CO2 + H2O. The catalysed reaction is a 5-formyl-2'-deoxycytidine in DNA + 2-oxoglutarate + O2 = a 5-carboxyl-2'-deoxycytidine in DNA + succinate + CO2 + H(+). Functionally, dioxygenase that catalyzes the conversion of the modified genomic base 5-methylcytosine (5mC) into 5-hydroxymethylcytosine (5hmC) and plays a key role in epigenetic chromatin reprogramming during embryonic development. Conversion of 5mC into 5hmC probably constitutes the first step in cytosine demethylation. Selectively binds to the promoter region of target genes and contributes to regulate the expression of numerous developmental genes, including pax6, rax, sox9 and six3. May also contribute to the regulation of target genes in ways that do not require its enzyme activity. In Xenopus laevis (African clawed frog), this protein is Methylcytosine dioxygenase tet3-B.